The following is a 223-amino-acid chain: Adenylate kinase 4, mitochondrial (223 aa).

An a ribonucleoside 5'-triphosphate-binding site is contributed by 15-20 (GSGKGT). An NMP region spans residues 35-64 (SSGHLLRENLKTGTEVGDVAKQYLEKGLLV). AMP is bound by residues Ser-36 and Arg-41. N6-succinyllysine is present on Lys-60. Residues 62 to 64 (LLV), 89 to 92 (GFPR), and Gln-96 each bind AMP. The interval 125-162 (RRWIHPSSGRVYNLDFNPPQVQGIDDITGEPLVQQEDD) is LID. A ribonucleoside 5'-triphosphate is bound by residues Arg-126 and 135-136 (VY). Arg-170 is an AMP binding site. Lys-175 bears the N6-acetyllysine mark. Lys-179 and Lys-186 each carry N6-acetyllysine; alternate. Residues Lys-179 and Lys-186 each carry the N6-succinyllysine; alternate modification. Thr-199 is an a ribonucleoside 5'-triphosphate binding site.

It belongs to the adenylate kinase family. AK3 subfamily. In terms of assembly, monomer. Interacts with SLC25A5/ANT2. In terms of tissue distribution, expressed in kidney, liver, stomach, brain, spinal cord, heart, ovary, oviduct, colon, jejunum, ileum and testis (at protein level). In the brain, expressed in the pyramidal cells of the cerebrum and glial cells in the cerebellum (at protein level). In the heart, expressed by myocytes (at protein level). In the kidney, expressed in the proximal to distal tubule in the cortex and the outer and inner zones of the medulla (at protein level). In the stomach, expressed in stratified squamous epithelia in the forestomach and in the gastric pit and mucus producing cells of the glandular stomach (at protein level). Expressed in epithelial cells of the jejunum, ileum, and colon (at protein level). In the testis, expressed by spermatocytes (at protein level). In the ovaries, expressed by oocytes, follicular epithelial cells, and corpus luteum cells (at protein level). In the oviduct, expressed in the epithelia of the isthmus and the ciliated cells of the ampulla (at protein level). Expressed in the pyramidal cells in the hippocampus.

It is found in the mitochondrion matrix. It carries out the reaction a ribonucleoside 5'-phosphate + ATP = a ribonucleoside 5'-diphosphate + ADP. It catalyses the reaction AMP + ATP = 2 ADP. The catalysed reaction is GTP + AMP = GDP + ADP. The enzyme catalyses CMP + ATP = CDP + ADP. It carries out the reaction GTP + CMP = CDP + GDP. It catalyses the reaction dAMP + ATP = dADP + ADP. The catalysed reaction is dCMP + ATP = dCDP + ADP. The enzyme catalyses a 2'-deoxyribonucleoside 5'-diphosphate + ATP = a 2'-deoxyribonucleoside 5'-triphosphate + ADP. It carries out the reaction a ribonucleoside 5'-diphosphate + ATP = a ribonucleoside 5'-triphosphate + ADP. It catalyses the reaction GDP + ATP = GTP + ADP. The catalysed reaction is CDP + GTP = CTP + GDP. The enzyme catalyses CDP + ATP = CTP + ADP. It carries out the reaction UDP + ATP = UTP + ADP. It catalyses the reaction GTP + UDP = UTP + GDP. The catalysed reaction is dADP + GTP = dATP + GDP. The enzyme catalyses dCDP + GTP = dCTP + GDP. It carries out the reaction dCDP + ATP = dCTP + ADP. It catalyses the reaction dGDP + ATP = dGTP + ADP. The catalysed reaction is dTDP + GTP = dTTP + GDP. The enzyme catalyses dTDP + ATP = dTTP + ADP. Functionally, broad-specificity mitochondrial nucleoside phosphate kinase involved in cellular nucleotide homeostasis by catalyzing nucleoside-phosphate interconversions. Similar to other adenylate kinases, preferentially catalyzes the phosphorylation of the nucleoside monophosphate AMP with ATP as phosphate donor to produce ADP. Phosphorylates only AMP when using GTP as phosphate donor. In vitro, can also catalyze the phosphorylation of CMP, dAMP and dCMP and use GTP as an alternate phosphate donor. Moreover, exhibits a diphosphate kinase activity, producing ATP, CTP, GTP, UTP, TTP, dATP, dCTP and dGTP from the corresponding diphosphate substrates with either ATP or GTP as phosphate donors. Plays a role in controlling cellular ATP levels by regulating phosphorylation and activation of the energy sensor protein kinase AMPK. Plays a protective role in the cellular response to oxidative stress. The polypeptide is Adenylate kinase 4, mitochondrial (Mus musculus (Mouse)).